Consider the following 341-residue polypeptide: MNIVVEFFLVTFKVLWAFVLAAARWLVRPKEKSVAGQVCLITGAGSGLGRLFALEFARRRALLVLWDINTQSNEETAGMVRHIYRDLEAADAAALQAGNGEEEILPPCNLQVFTYTCDVGKRENVYLTAERVRKEVGEVSVLVNNAGVVSGHHLLECPDELIERTMMVNCHAHFWTTKAFLPTMLEINHGHIVTVASSLGLFSTAGVEDYCASKFGVVGFHESLSHELKAAEKDGIKTTLVCPYLVDTGMFRGCRIRKEIEPFLPPLKPDYCVKQAMKAILTDQPMICTPRLMYIVTFMKSILPFEAVVCMYRFLGADKCMYPFIAQRKQATNNNEAKNGI.

A helical; Signal-anchor membrane pass occupies residues 3 to 23; sequence IVVEFFLVTFKVLWAFVLAAA. 40–64 lines the NADP(+) pocket; sequence LITGAGSGLGRLFALEFARRRALLV. Residue Ser197 participates in substrate binding. Residue Tyr210 is the Proton acceptor of the active site.

It belongs to the short-chain dehydrogenases/reductases (SDR) family. As to expression, detected in retina, entire eyecups and in liver (at protein level).

The protein resides in the microsome membrane. It localises to the endoplasmic reticulum membrane. It catalyses the reaction all-trans-retinol + NADP(+) = all-trans-retinal + NADPH + H(+). It participates in cofactor metabolism; retinol metabolism. Its function is as follows. Retinol dehydrogenase with a clear preference for NADP. Converts all-trans-retinol to all-trans-retinal. This Rattus norvegicus (Rat) protein is Retinol dehydrogenase 10 (Rdh10).